The chain runs to 605 residues: Zinc metalloproteinase nas-34 (605 aa).

A signal peptide spans 1–19; the sequence is MVSYWPVLIVLCLLPICHA. Positions 20-124 are excised as a propeptide; that stretch reads KSYFADFVNG…EFLYAIRGKR (105 aa). A Peptidase M12A domain is found at 124–322; the sequence is RSMTSFLSER…VKRINFAYCN (199 aa). 2 cysteine pairs are disulfide-bonded: cysteine 165-cysteine 321 and cysteine 191-cysteine 211. Histidine 219 is a Zn(2+) binding site. Glutamate 220 is an active-site residue. The Zn(2+) site is built by histidine 223 and histidine 229. The 41-residue stretch at 317 to 357 folds into the EGF-like domain; the sequence is NFAYCNSTCSNYLDCQNGGYINPNDCNNCKCPPGFGGQLCD. Asparagine 322 carries an N-linked (GlcNAc...) asparagine glycan. Disulfide bonds link cysteine 325-cysteine 345, cysteine 347-cysteine 356, cysteine 366-cysteine 388, and cysteine 415-cysteine 436. One can recognise a CUB domain in the interval 366–469; sequence CGAGDITATS…ARFSLNYRYD (104 aa). The segment at 479–526 is disordered; sequence TTTSTTTTTAPITVPTVSPTTTTTRQTTTTARTSTTTTTTQAPPTTTT. In terms of domain architecture, TSP type-1 spans 525–566; sequence TTSTSQCASWSACSAQCGGCGTQSRRCGTYVETVYCNTNPCT. Cystine bridges form between cysteine 531-cysteine 551, cysteine 537-cysteine 560, and cysteine 541-cysteine 565.

The cofactor is Zn(2+). Expressed in hypodermal cells. First expressed in the dorsal and lateral surface area of the middle and posterior region of embryos. At later stages, it localizes to lateral surface regions, probably corresponding to hypodermal seam cells. In L1 larvae, it is expressed in seam cells and in a few cells anterior to the nerve ring.

It is found in the secreted. Functionally, metalloprotease. Required for normal hatching and migration of neuroblasts. May act by degrading eggshell proteins at hatching. This Caenorhabditis elegans protein is Zinc metalloproteinase nas-34 (hch-1).